A 110-amino-acid chain; its full sequence is Small ribosomal subunit protein bS16 (110 aa).

Basic and acidic residues predominate over residues 82-103; it reads VKKREARNNPEKAVPRKERKAQ. The interval 82-110 is disordered; sequence VKKREARNNPEKAVPRKERKAQAEAAAKG.

The protein belongs to the bacterial ribosomal protein bS16 family.

This is Small ribosomal subunit protein bS16 from Bradyrhizobium sp. (strain ORS 278).